A 583-amino-acid chain; its full sequence is Inactive carboxylesterase-like protein VdtD (583 aa).

Residues Met1–Ala23 form the signal peptide. Residues Asn84, Asn109, Asn221, Asn265, Asn307, Asn350, Asn388, Asn448, and Asn468 are each glycosylated (N-linked (GlcNAc...) asparagine).

It belongs to the type-B carboxylesterase/lipase family.

Its pathway is secondary metabolite biosynthesis. In terms of biological role, inactive carboxylesterase-like protein; part of the gene cluster that mediates the biosynthesis of viriditoxin, one of the 'classical' secondary metabolites produced by fungi and that has antibacterial activity. The first step is performed by the polyketide synthase VdtA which condenses one acetyl-CoA and 6 malonyl-CoA units to form the heptaketide monomer backbone of viriditoxin. The product of VdtA is then O-methylated on C7 by the O-methyltransferase VdtC. The O-methyl group is important for the stereoselective coupling of the monomers at the final step of viriditoxin biosynthesis. The short-chain dehydrogenase/reductase VdtF then acts as a stereospecific reductase converting the pyrone to dihydropyrone via the reduction of the C3-C4 double bond. The FAD-binding monooxygenase VdtE then converts the ketone group into a methyl-ester group to yield semi-viriditoxin. Finally, the laccase VdtB is involved in dimerization of 2 semi-viriditoxin molecules to yield the final viriditoxin. VdtB is responsible for the regioselective 6,6'-coupling of semi-viriditoxin, which yields (M)-viriditoxin and (P)-viriditoxin at a ratio of 1:2. The non-catalytic carboxylesterase-like protein VdtD affects the stereochemistical outcome of the coupling. The highly reducing polyketide synthase VdtX is not involved in viriditoxin synthesis, but might possibly play a role in the production of additional metabolites not identified yet. The polypeptide is Inactive carboxylesterase-like protein VdtD (Byssochlamys spectabilis (Paecilomyces variotii)).